Consider the following 552-residue polypeptide: T-box transcription factor TBX4 (552 aa).

A compositionally biased stretch (basic and acidic residues) spans 1–14; sequence MLQDKGLSESEEAF. Residues 1–50 are disordered; the sequence is MLQDKGLSESEEAFRAPGPALGEASNTSTTNAPEPALATPGLSGAALSSP. A DNA-binding region (T-box) is located at residues 76 to 256; the sequence is LHEKELWKKF…NNPFAKGFRG (181 aa). The residue at position 514 (Ser514) is a Phosphoserine.

The protein resides in the nucleus. In terms of biological role, transcriptional regulator that has an essential role in the organogenesis of lungs, pelvis, and hindlimbs. This Mus musculus (Mouse) protein is T-box transcription factor TBX4 (Tbx4).